A 425-amino-acid polypeptide reads, in one-letter code: 3-phosphoshikimate 1-carboxyvinyltransferase (425 aa).

The 3-phosphoshikimate site is built by lysine 22, serine 23, and arginine 27. Position 22 (lysine 22) interacts with phosphoenolpyruvate. Phosphoenolpyruvate is bound by residues glycine 95 and arginine 123. The 3-phosphoshikimate site is built by serine 169, serine 170, glutamine 171, serine 197, aspartate 313, asparagine 336, and lysine 340. Glutamine 171 contacts phosphoenolpyruvate. Aspartate 313 serves as the catalytic Proton acceptor. Arginine 344, arginine 386, and lysine 411 together coordinate phosphoenolpyruvate.

This sequence belongs to the EPSP synthase family. In terms of assembly, monomer.

Its subcellular location is the cytoplasm. It carries out the reaction 3-phosphoshikimate + phosphoenolpyruvate = 5-O-(1-carboxyvinyl)-3-phosphoshikimate + phosphate. The protein operates within metabolic intermediate biosynthesis; chorismate biosynthesis; chorismate from D-erythrose 4-phosphate and phosphoenolpyruvate: step 6/7. In terms of biological role, catalyzes the transfer of the enolpyruvyl moiety of phosphoenolpyruvate (PEP) to the 5-hydroxyl of shikimate-3-phosphate (S3P) to produce enolpyruvyl shikimate-3-phosphate and inorganic phosphate. The sequence is that of 3-phosphoshikimate 1-carboxyvinyltransferase from Marinomonas sp. (strain MWYL1).